Here is a 504-residue protein sequence, read N- to C-terminus: L-carnitine/gamma-butyrobetaine antiporter (504 aa).

The next 12 helical transmembrane spans lie at Ile-10–Val-30, Trp-51–Phe-71, Ile-92–Ile-112, Gly-143–Val-163, Phe-195–Val-215, Leu-231–Leu-251, Ser-263–Met-283, Trp-316–Ala-336, Leu-347–Gly-367, Trp-398–Ala-418, Leu-446–Leu-466, and Ala-475–Ile-495.

It belongs to the BCCT transporter (TC 2.A.15) family. CaiT subfamily. Homotrimer.

It localises to the cell inner membrane. It catalyses the reaction 4-(trimethylamino)butanoate(in) + (R)-carnitine(out) = 4-(trimethylamino)butanoate(out) + (R)-carnitine(in). Its pathway is amine and polyamine metabolism; carnitine metabolism. Its function is as follows. Catalyzes the exchange of L-carnitine for gamma-butyrobetaine. This is L-carnitine/gamma-butyrobetaine antiporter from Escherichia coli O6:K15:H31 (strain 536 / UPEC).